The sequence spans 239 residues: Large ribosomal subunit protein uL1 (239 aa).

This sequence belongs to the universal ribosomal protein uL1 family. In terms of assembly, part of the 50S ribosomal subunit.

Binds directly to 23S rRNA. The L1 stalk is quite mobile in the ribosome, and is involved in E site tRNA release. Its function is as follows. Protein L1 is also a translational repressor protein, it controls the translation of the L11 operon by binding to its mRNA. In Rickettsia conorii (strain ATCC VR-613 / Malish 7), this protein is Large ribosomal subunit protein uL1.